A 308-amino-acid polypeptide reads, in one-letter code: MAGKSKILFIGGTGYIGKFIVEASAKAGHDTFVLVRESTLSNPTKTKLIDTFKSFGVTFVHGDLYDHESLVKAIKQVDVVISTVGHALLADQVKLIAAIKEAGNVKRFFPSEFGNDVDRVHAVEPAKAAFNTKAQIRRVVEAEGIPFTYVATFFFAGYSLPNLAQPGAAGPPNDKVVILGHGNTKAVFNKEEDIGTYTINAVDDPKTLNKILYIKPPHNIITLNELVSLWEKKTGKNLERLYVPEEQVLKNIQEASVPMNVGLSIYHTAFVKGDHTNFEIEPSFGVEASEVYPDVKYTPIDEILNQYV.

NADP(+) contacts are provided by residues 11-17, Arg36, and Lys45; that span reads GGTGYIG. Lys133 serves as the catalytic Proton acceptor. Arg137 is an NADP(+) binding site.

The protein belongs to the NmrA-type oxidoreductase family. Isoflavone reductase subfamily.

It is found in the cytoplasm. The polypeptide is Isoflavone reductase homolog (Solanum tuberosum (Potato)).